A 266-amino-acid chain; its full sequence is 4-hydroxy-tetrahydrodipicolinate reductase (266 aa).

An NAD(+)-binding site is contributed by 10-15 (GPRGRM). K38 contributes to the NADP(+) binding site. Residues 99 to 101 (GTT) and 125 to 128 (APNF) contribute to the NAD(+) site. Catalysis depends on H155, which acts as the Proton donor/acceptor. Residue H156 coordinates (S)-2,3,4,5-tetrahydrodipicolinate. K159 (proton donor) is an active-site residue. 165-166 (GT) lines the (S)-2,3,4,5-tetrahydrodipicolinate pocket.

Belongs to the DapB family.

Its subcellular location is the cytoplasm. It catalyses the reaction (S)-2,3,4,5-tetrahydrodipicolinate + NAD(+) + H2O = (2S,4S)-4-hydroxy-2,3,4,5-tetrahydrodipicolinate + NADH + H(+). The enzyme catalyses (S)-2,3,4,5-tetrahydrodipicolinate + NADP(+) + H2O = (2S,4S)-4-hydroxy-2,3,4,5-tetrahydrodipicolinate + NADPH + H(+). It participates in amino-acid biosynthesis; L-lysine biosynthesis via DAP pathway; (S)-tetrahydrodipicolinate from L-aspartate: step 4/4. Its function is as follows. Catalyzes the conversion of 4-hydroxy-tetrahydrodipicolinate (HTPA) to tetrahydrodipicolinate. The protein is 4-hydroxy-tetrahydrodipicolinate reductase of Bacillus cereus (strain B4264).